Here is a 457-residue protein sequence, read N- to C-terminus: Histidine--tRNA ligase (457 aa).

Belongs to the class-II aminoacyl-tRNA synthetase family. Homodimer.

It localises to the cytoplasm. The enzyme catalyses tRNA(His) + L-histidine + ATP = L-histidyl-tRNA(His) + AMP + diphosphate + H(+). In Mesoplasma florum (strain ATCC 33453 / NBRC 100688 / NCTC 11704 / L1) (Acholeplasma florum), this protein is Histidine--tRNA ligase.